The primary structure comprises 521 residues: Beta-glucosidase 11 (521 aa).

A signal peptide spans 1-23 (MKLLSNSLMFLPLLALALTAVSS). Residues glutamine 45, histidine 144, and 189–190 (NE) contribute to the a beta-D-glucoside site. Glutamate 190 functions as the Proton donor in the catalytic mechanism. An intrachain disulfide couples cysteine 209 to cysteine 217. Residues asparagine 216 and asparagine 221 are each glycosylated (N-linked (GlcNAc...) asparagine). Residue tyrosine 356 participates in a beta-D-glucoside binding. 2 N-linked (GlcNAc...) asparagine glycosylation sites follow: asparagine 364 and asparagine 388. 3 residues coordinate a beta-D-glucoside: glutamate 422, tryptophan 466, and phenylalanine 482. The Nucleophile role is filled by glutamate 422.

Belongs to the glycosyl hydrolase 1 family.

The catalysed reaction is Hydrolysis of terminal, non-reducing beta-D-glucosyl residues with release of beta-D-glucose.. In Arabidopsis thaliana (Mouse-ear cress), this protein is Beta-glucosidase 11.